We begin with the raw amino-acid sequence, 131 residues long: ATP synthase epsilon chain, chloroplastic (131 aa).

Belongs to the ATPase epsilon chain family. In terms of assembly, F-type ATPases have 2 components, CF(1) - the catalytic core - and CF(0) - the membrane proton channel. CF(1) has five subunits: alpha(3), beta(3), gamma(1), delta(1), epsilon(1). CF(0) has three main subunits: a, b and c.

Its subcellular location is the plastid. The protein localises to the chloroplast thylakoid membrane. Its function is as follows. Produces ATP from ADP in the presence of a proton gradient across the membrane. This chain is ATP synthase epsilon chain, chloroplastic, found in Oltmannsiellopsis viridis (Marine flagellate).